A 156-amino-acid polypeptide reads, in one-letter code: ATP synthase subunit b (156 aa).

Residues 7-27 (LIGQTVAFIIFVWFCMKFVWP) form a helical membrane-spanning segment.

It belongs to the ATPase B chain family. In terms of assembly, F-type ATPases have 2 components, F(1) - the catalytic core - and F(0) - the membrane proton channel. F(1) has five subunits: alpha(3), beta(3), gamma(1), delta(1), epsilon(1). F(0) has three main subunits: a(1), b(2) and c(10-14). The alpha and beta chains form an alternating ring which encloses part of the gamma chain. F(1) is attached to F(0) by a central stalk formed by the gamma and epsilon chains, while a peripheral stalk is formed by the delta and b chains.

The protein localises to the cell inner membrane. Functionally, f(1)F(0) ATP synthase produces ATP from ADP in the presence of a proton or sodium gradient. F-type ATPases consist of two structural domains, F(1) containing the extramembraneous catalytic core and F(0) containing the membrane proton channel, linked together by a central stalk and a peripheral stalk. During catalysis, ATP synthesis in the catalytic domain of F(1) is coupled via a rotary mechanism of the central stalk subunits to proton translocation. Its function is as follows. Component of the F(0) channel, it forms part of the peripheral stalk, linking F(1) to F(0). The polypeptide is ATP synthase subunit b (Shewanella sp. (strain ANA-3)).